We begin with the raw amino-acid sequence, 178 residues long: Fatty-acid and retinol-binding protein 1 (178 aa).

The N-terminal stretch at M1–A16 is a signal peptide. Coiled coils occupy residues D67 to N89 and K130 to V153.

The protein belongs to the fatty-acid and retinol-binding protein (FARBP) family. In terms of processing, not glycosylated.

The protein localises to the secreted. Functionally, binds retinol. Also binds the fluorescent fatty acid 11-((5-dimethylaminonaphthalene-1-sulfonyl)amino)undecanoic acid (DAUDA). The long chain fatty acid oleic acid can act competitively to displace bound DAUDA and retinol. This Brugia malayi (Filarial nematode worm) protein is Fatty-acid and retinol-binding protein 1.